An 844-amino-acid polypeptide reads, in one-letter code: Aminopeptidase N (844 aa).

Substrate contacts are provided by residues E120 and 253–257 (GAMEN). A Zn(2+)-binding site is contributed by H289. E290 serves as the catalytic Proton acceptor. The Zn(2+) site is built by H293 and E312.

This sequence belongs to the peptidase M1 family. In terms of assembly, monomer. Zn(2+) serves as cofactor.

It localises to the cytoplasm. The enzyme catalyses Release of an N-terminal amino acid, Xaa-|-Yaa- from a peptide, amide or arylamide. Xaa is preferably Ala, but may be most amino acids including Pro (slow action). When a terminal hydrophobic residue is followed by a prolyl residue, the two may be released as an intact Xaa-Pro dipeptide.. In terms of biological role, aminopeptidase N is involved in the degradation of intracellular peptides generated by protein breakdown during normal growth as well as in response to nutrient starvation. In Lactobacillus helveticus (Lactobacillus suntoryeus), this protein is Aminopeptidase N (pepN).